A 245-amino-acid chain; its full sequence is Protein crossbronx (245 aa).

A UBC core domain is found at 20–177 (QQEYKILAEY…VQESIVESKS (158 aa)).

Belongs to the ubiquitin-conjugating enzyme family. FTS subfamily.

The sequence is that of Protein crossbronx (cbx) from Drosophila virilis (Fruit fly).